The primary structure comprises 133 residues: Small ribosomal subunit protein uS8c (133 aa).

Belongs to the universal ribosomal protein uS8 family. In terms of assembly, part of the 30S ribosomal subunit.

The protein localises to the plastid. The protein resides in the chloroplast. In terms of biological role, one of the primary rRNA binding proteins, it binds directly to 16S rRNA central domain where it helps coordinate assembly of the platform of the 30S subunit. The sequence is that of Small ribosomal subunit protein uS8c (rps8) from Cyanidium caldarium (Red alga).